The chain runs to 279 residues: Putative carbamate hydrolase RutD (279 aa).

The 104-residue stretch at 23 to 126 (PVVVLISGLG…LVSVNGWLRI (104 aa)) folds into the AB hydrolase-1 domain.

It belongs to the AB hydrolase superfamily. Hydrolase RutD family.

The catalysed reaction is carbamate + 2 H(+) = NH4(+) + CO2. In terms of biological role, involved in pyrimidine catabolism. May facilitate the hydrolysis of carbamate, a reaction that can also occur spontaneously. In Escherichia coli O17:K52:H18 (strain UMN026 / ExPEC), this protein is Putative carbamate hydrolase RutD.